The sequence spans 31 residues: Sarcolipin (31 aa).

Residues 1–7 (MERSTQE) lie on the Cytoplasmic side of the membrane. The chain crosses the membrane as a helical span at residues 8–26 (LFINFTVVLITVLLMWLLV). Residues 27-31 (RSYQY) are Lumenal-facing.

It belongs to the sarcolipin family. In terms of assembly, homooligomer. Can also form heterooligomers with other sarcoplasmic/endoplasmic reticulum calcium ATPase (SERCA) regulators ARLN, ERLN, PLN and STRIT1/DWORF. Monomer. Interacts with calcium ATPase ATP2A1/SERCA1. Interacts as a monomer with ATP2A2/SERCA2; the interaction decreases ATP2A2 Ca(2+) affinity. Interacts with VMP1; VMP1 competes with PLN and SLN to prevent them from forming an inhibitory complex with ATP2A2.

The protein resides in the sarcoplasmic reticulum membrane. The protein localises to the endoplasmic reticulum membrane. In terms of biological role, reversibly inhibits the activity of ATP2A1/SERCA1 and ATP2A2/SERCA2 in sarcoplasmic reticulum by decreasing the apparent affinity of the ATPase for Ca(2+). Also inhibits the activity of ATP2A3/SERCA3. Modulates calcium re-uptake during muscle relaxation and plays an important role in calcium homeostasis in muscle. Required for muscle-based, non-shivering thermogenesis. This Rattus norvegicus (Rat) protein is Sarcolipin (Sln).